The chain runs to 279 residues: Alcohol dehydrogenase-related 31 kDa protein (279 aa).

11–34 (YVADCGGIALETSKVLMTKNIAKL) contacts NAD(+). S139 is a binding site for substrate. Catalysis depends on Y152, which acts as the Proton acceptor.

It belongs to the short-chain dehydrogenases/reductases (SDR) family.

This Drosophila madeirensis (Fruit fly) protein is Alcohol dehydrogenase-related 31 kDa protein (Adhr).